The chain runs to 331 residues: Ribosomal RNA small subunit methyltransferase C (331 aa).

The protein belongs to the methyltransferase superfamily. RsmC family. In terms of assembly, monomer.

The protein resides in the cytoplasm. The catalysed reaction is guanosine(1207) in 16S rRNA + S-adenosyl-L-methionine = N(2)-methylguanosine(1207) in 16S rRNA + S-adenosyl-L-homocysteine + H(+). Its function is as follows. Specifically methylates the guanine in position 1207 of 16S rRNA in the 30S particle. The polypeptide is Ribosomal RNA small subunit methyltransferase C (Ectopseudomonas mendocina (strain ymp) (Pseudomonas mendocina)).